Reading from the N-terminus, the 661-residue chain is MPLPSRASSTPKISKACVPCRTRKIKCNAAVVGLPCGSCVSRECPDECVLSARKRRTVKGRNAETPRSRKNIPDTNGSVLSPRQQQLPTNVSRQATDSSHSDPVEESIHASHTGSSLRNDTPHSRDRRPPGQTQADLLYLNILQDTVNDTSAAQTDASDHQSNDEPDDSFNSQIHHWNPPPQLDDVDNEYLAKKKVFELPPPRFMENIVKAYFDYVHPFAPILNRTDFIQSYRSGSCCLFLLHAVAAAASLYVTHDVLIGCGYQDRSTAQASFFSKAKLFHDFHCQGDPLSMLQGSMILGAIILDHPSDRDFQYWFHNSVRRASKMGVQNACLRDDGSQKLYRRIWWVLHNRDIFHFFINTQNMRLLANAPPIRPLTEADWETEDMEQWSGILSPISQAQKVSLIAQCELAQIFGNVMSVVTSSTPSAEEIHKRILPLDAWRTSLPERMQLMASFANGEKYHLEALTTSYRFECIMCRLLRRGRWQMSDGGLREWAQQRFRSAIFELDTIVKRVMINNTIQKLPTTFITTITALLALHIESALDAAESSLIRSMARISVQHTMLALDQIRDTPAIKRALPAFEIVLSKNKLYPMSTSDTEQISTIQTIPQDQTLSDGQILQPPPTDMTLPQDDQSFLYGDFIGFDFLDRWQMEQLDFTGIY.

Positions 17–48 (CVPCRTRKIKCNAAVVGLPCGSCVSRECPDEC) form a DNA-binding region, zn(2)-C6 fungal-type. 2 disordered regions span residues 56–132 (RTVK…PPGQ) and 151–184 (SAAQ…PQLD). Positions 73–98 (PDTNGSVLSPRQQQLPTNVSRQATDS) are enriched in polar residues. Residues 99-109 (SHSDPVEESIH) show a composition bias toward basic and acidic residues. A compositionally biased stretch (polar residues) spans 110 to 119 (ASHTGSSLRN). Residues 120–129 (DTPHSRDRRP) show a composition bias toward basic and acidic residues.

The protein localises to the nucleus. Its function is as follows. Transcription factor that is involved in the formation of the two Fusaric acid derivatives, dehydrofusaric acid and fusarinolic acid, serving as a detoxification mechanism. The chain is Fusaric acid cluster transcription factor FUB12 from Gibberella moniliformis (strain M3125 / FGSC 7600) (Maize ear and stalk rot fungus).